A 128-amino-acid polypeptide reads, in one-letter code: uncharacterized protein (128 aa).

A VOC domain is found at 1–126 (MHHIELYVSD…DRIKVELVAP (126 aa)).

This is an uncharacterized protein from Bacillus subtilis (strain 168).